The sequence spans 548 residues: Membrane protein insertase YidC (548 aa).

Residues 6–26 (NLLVIALLFVSFMIWQAWEQD) traverse the membrane as a helical segment. A disordered region spans residues 28–54 (NPQPQTQQTTQTTTTAAGSAADQGVPA). Low complexity predominate over residues 29–42 (PQPQTQQTTQTTTT). 4 helical membrane passes run 350 to 370 (FLGN…GIMY), 424 to 444 (FPLI…MGSI), 458 to 478 (LSAQ…MFFI), and 499 to 519 (PVIF…YYIV).

This sequence belongs to the OXA1/ALB3/YidC family. Type 1 subfamily. As to quaternary structure, interacts with the Sec translocase complex via SecD. Specifically interacts with transmembrane segments of nascent integral membrane proteins during membrane integration.

The protein resides in the cell inner membrane. Its function is as follows. Required for the insertion and/or proper folding and/or complex formation of integral membrane proteins into the membrane. Involved in integration of membrane proteins that insert both dependently and independently of the Sec translocase complex, as well as at least some lipoproteins. Aids folding of multispanning membrane proteins. In Citrobacter koseri (strain ATCC BAA-895 / CDC 4225-83 / SGSC4696), this protein is Membrane protein insertase YidC.